A 383-amino-acid polypeptide reads, in one-letter code: MTSSPTVNLLDLDAQGLVAYCDSLGEKPFRAKQLQRWIHQYNAADFDGMTDLAKSLREKLKGRATISMPGIVSDNISTDGTRKWLIDVGNSNAVETVYIPEETRGTLCVSSQAGCAVNCRFCSTGKQGFSRNLTTAEIIGQLRMAEFALRASRGIDGGRATGGDGKGERVVTNVVMMGMGEPLLNYDAVVPAMRLMLDDNAYGLSRRRVTLSTSGVVPMMDRLGADLPVALAVSLHAPSDPLRDMLVPLNKKYPLRELMAACQRYLKVAPRDFITFEYCMLDGVNDSEAQARELLALTRDVPCKFNLIPFNPFPESGLIRSKPEQIKRFAQVLMDAGVVTTVRKTRGDDIDAACGQLAGAVKDRTRLAERTGKAAKVIEVRAV.

Residue glutamate 95 is the Proton acceptor of the active site. The Radical SAM core domain occupies 101–349 (EETRGTLCVS…TTVRKTRGDD (249 aa)). Cysteine 108 and cysteine 354 are joined by a disulfide. [4Fe-4S] cluster is bound by residues cysteine 115, cysteine 119, and cysteine 122. S-adenosyl-L-methionine contacts are provided by residues 180–181 (GE), serine 212, 234–236 (SLH), and asparagine 311. Cysteine 354 acts as the S-methylcysteine intermediate in catalysis.

The protein belongs to the radical SAM superfamily. RlmN family. [4Fe-4S] cluster is required as a cofactor.

The protein localises to the cytoplasm. The catalysed reaction is adenosine(2503) in 23S rRNA + 2 reduced [2Fe-2S]-[ferredoxin] + 2 S-adenosyl-L-methionine = 2-methyladenosine(2503) in 23S rRNA + 5'-deoxyadenosine + L-methionine + 2 oxidized [2Fe-2S]-[ferredoxin] + S-adenosyl-L-homocysteine. It carries out the reaction adenosine(37) in tRNA + 2 reduced [2Fe-2S]-[ferredoxin] + 2 S-adenosyl-L-methionine = 2-methyladenosine(37) in tRNA + 5'-deoxyadenosine + L-methionine + 2 oxidized [2Fe-2S]-[ferredoxin] + S-adenosyl-L-homocysteine. Specifically methylates position 2 of adenine 2503 in 23S rRNA and position 2 of adenine 37 in tRNAs. m2A2503 modification seems to play a crucial role in the proofreading step occurring at the peptidyl transferase center and thus would serve to optimize ribosomal fidelity. This is Dual-specificity RNA methyltransferase RlmN from Paraburkholderia phytofirmans (strain DSM 17436 / LMG 22146 / PsJN) (Burkholderia phytofirmans).